The chain runs to 542 residues: Sensory neuron membrane protein 2 (542 aa).

Residues 1-487 (MMVMNTELRQ…MKVLTLLDIV (487 aa)) lie on the Extracellular side of the membrane. Residues N33, N128, N238, and N274 are each glycosylated (N-linked (GlcNAc...) asparagine). 3 cysteine pairs are disulfide-bonded: C283–C351, C312–C378, and C353–C367. A helical membrane pass occupies residues 488 to 508 (QWVMIGSGLLLAIIMPIVYFI). Residues 509 to 542 (KRRPSSGSITPTLTTTTSTVSISDGGGLGGNPQK) lie on the Cytoplasmic side of the membrane.

Belongs to the CD36 family. In terms of tissue distribution, detected in the antenna, legs and wings. Higher levels of expression detected in male compared to female.

The protein resides in the cell membrane. Its function is as follows. Plays an olfactory role that is not restricted to pheromone sensitivity. In Aedes aegypti (Yellowfever mosquito), this protein is Sensory neuron membrane protein 2.